The primary structure comprises 207 residues: Cytochrome c biogenesis ATP-binding export protein CcmA (207 aa).

In terms of domain architecture, ABC transporter spans 2 to 204 (LECENLSCTR…TTIDIRNFNR (203 aa)). 34 to 41 (GPNGSGKT) lines the ATP pocket.

Belongs to the ABC transporter superfamily. CcmA exporter (TC 3.A.1.107) family. The complex is composed of two ATP-binding proteins (CcmA) and two transmembrane proteins (CcmB).

It is found in the cell membrane. The catalysed reaction is heme b(in) + ATP + H2O = heme b(out) + ADP + phosphate + H(+). Its function is as follows. Part of the ABC transporter complex CcmAB involved in the biogenesis of c-type cytochromes; once thought to export heme, this seems not to be the case, but its exact role is uncertain. Responsible for energy coupling to the transport system. This is Cytochrome c biogenesis ATP-binding export protein CcmA from Wolbachia pipientis wMel.